Reading from the N-terminus, the 382-residue chain is Putative UDP-sugar transporter DDB_G0278631 (382 aa).

A run of 7 helical transmembrane segments spans residues 117–137 (FSASNFLLFNQMVVTIVILHI), 183–203 (MYSALKRLVAVVILVMEYFIL), 211–231 (IIASVVVMVIGAVVAGITDLS), 234–254 (SLGYSLVLLSCIFQASYLIYV), 264–284 (YDMLYYNSVLSLPITIFLMIV), 302–322 (FQAYFILSIFLGFFLNFCIFF), and 354–374 (IIIHPINILGLIINIIGSIWY).

The protein belongs to the TPT transporter family. SLC35D subfamily.

The protein resides in the membrane. In terms of biological role, may be nvolved in the import of UDP-sugars. This is Putative UDP-sugar transporter DDB_G0278631 from Dictyostelium discoideum (Social amoeba).